We begin with the raw amino-acid sequence, 229 residues long: Potassium/proton antiporter CemA (229 aa).

The next 3 helical transmembrane spans lie at 7–27, 114–134, and 190–210; these read FTPL…SLSF, IISF…LVIL, and ISGL…YWIF.

It belongs to the CemA family.

The protein resides in the plastid. It is found in the chloroplast inner membrane. It catalyses the reaction K(+)(in) + H(+)(out) = K(+)(out) + H(+)(in). In terms of biological role, contributes to K(+)/H(+) antiport activity by supporting proton efflux to control proton extrusion and homeostasis in chloroplasts in a light-dependent manner to modulate photosynthesis. Prevents excessive induction of non-photochemical quenching (NPQ) under continuous-light conditions. Indirectly promotes efficient inorganic carbon uptake into chloroplasts. This is Potassium/proton antiporter CemA from Jasminum nudiflorum (Winter jasmine).